The sequence spans 103 residues: Small ribosomal subunit protein uS10 (103 aa).

Belongs to the universal ribosomal protein uS10 family. As to quaternary structure, part of the 30S ribosomal subunit.

In terms of biological role, involved in the binding of tRNA to the ribosomes. In Azotobacter vinelandii (strain DJ / ATCC BAA-1303), this protein is Small ribosomal subunit protein uS10.